A 314-amino-acid chain; its full sequence is Olfactory receptor 1 (314 aa).

The Extracellular portion of the chain corresponds to 1 to 29; that stretch reads MTERNQTVISQFLLLGLPIPPEHQHVFYA. Asn-5 carries N-linked (GlcNAc...) asparagine glycosylation. Residues 30–50 form a helical membrane-spanning segment; sequence LFLSMYLTTVLGNLIIIILIL. Topologically, residues 51-59 are cytoplasmic; the sequence is LDSHLHTPM. The chain crosses the membrane as a helical span at residues 60 to 81; it reads YLFLSNLSFSDLCFSSVTMPKL. At 82–97 the chain is on the extracellular side; it reads LQNMQSQVPSIPYAGC. A disulfide bridge connects residues Cys-97 and Cys-179. A helical transmembrane segment spans residues 98 to 118; the sequence is LSQIYFFLFFGDLGNFLLVAM. At 119-143 the chain is on the cytoplasmic side; it reads AYDRYVAICFPLHYMSIMSPKLCVS. Residues 144-164 traverse the membrane as a helical segment; that stretch reads LVVLSWVLTTFHAMLHTLLMA. Topologically, residues 165 to 196 are extracellular; that stretch reads RLSFCEDNVIPHFFCDMSALLKLACSDTRVNE. Residues 197–217 form a helical membrane-spanning segment; that stretch reads VVIFIVVSLFLVLPFALIIMS. The Cytoplasmic portion of the chain corresponds to 218–240; sequence YVRIVSSILKVPSSQGIYKAFST. Residues 241 to 261 traverse the membrane as a helical segment; the sequence is CGSHLSVVSLFYGTVIGLYLC. Over 262–271 the chain is Extracellular; the sequence is PSSNNSTVKE. N-linked (GlcNAc...) asparagine glycans are attached at residues Asn-265 and Asn-266. The helical transmembrane segment at 272–292 threads the bilayer; it reads TVMSLMYTVVTPMLNPFIYSL. Over 293 to 314 the chain is Cytoplasmic; that stretch reads RNRDIKGAMERIFCKRKIQLNL.

The protein belongs to the G-protein coupled receptor 1 family. In terms of tissue distribution, olfactory epithelium.

It localises to the cell membrane. Odorant receptor. Activated by a lily-derived aldehyde as well as other odorants. May signal through an inositol 1,4,5-trisphosphate (IP3) second messenger system. This Rattus norvegicus (Rat) protein is Olfactory receptor 1.